The chain runs to 113 residues: Hydrogenase maturation factor HypA (113 aa).

His-2 contributes to the Ni(2+) binding site. The Zn(2+) site is built by Cys-70, Cys-73, Cys-86, and Cys-88.

It belongs to the HypA/HybF family.

Its function is as follows. Involved in the maturation of [NiFe] hydrogenases. Required for nickel insertion into the metal center of the hydrogenase. The chain is Hydrogenase maturation factor HypA from Trichormus variabilis (strain ATCC 29413 / PCC 7937) (Anabaena variabilis).